Reading from the N-terminus, the 47-residue chain is ATP-dependent zinc metalloprotease FTSH, chloroplastic (47 aa).

In the N-terminal section; belongs to the AAA ATPase family. This sequence in the C-terminal section; belongs to the peptidase M41 family. Zn(2+) serves as cofactor.

The protein resides in the plastid. It is found in the chloroplast membrane. Its function is as follows. Seems to act as an ATP-dependent zinc metallopeptidase. This chain is ATP-dependent zinc metalloprotease FTSH, chloroplastic, found in Populus euphratica (Euphrates poplar).